We begin with the raw amino-acid sequence, 541 residues long: Arginine--tRNA ligase (541 aa).

A 'HIGH' region motif is present at residues 119-129 (ANPTGPLHIGH).

It belongs to the class-I aminoacyl-tRNA synthetase family. Monomer.

It is found in the cytoplasm. It carries out the reaction tRNA(Arg) + L-arginine + ATP = L-arginyl-tRNA(Arg) + AMP + diphosphate. The sequence is that of Arginine--tRNA ligase from Helicobacter pylori (strain G27).